Here is a 508-residue protein sequence, read N- to C-terminus: tRNA-2-methylthio-N(6)-dimethylallyladenosine synthase (508 aa).

A disordered region spans residues 1–21 (MNEEQRKASGQVSSSDKKSEK). One can recognise an MTTase N-terminal domain in the interval 65-183 (RKFYIRTYGC…LPELLSECYL (119 aa)). C74, C110, C144, C220, C224, and C227 together coordinate [4Fe-4S] cluster. The Radical SAM core domain occupies 206–436 (RQGKIKGWVN…NALVNEISAK (231 aa)). Residues 439–502 (KEYEGQTVEV…TWSLDGEMVG (64 aa)) enclose the TRAM domain.

The protein belongs to the methylthiotransferase family. MiaB subfamily. Monomer. [4Fe-4S] cluster is required as a cofactor.

It localises to the cytoplasm. The enzyme catalyses N(6)-dimethylallyladenosine(37) in tRNA + (sulfur carrier)-SH + AH2 + 2 S-adenosyl-L-methionine = 2-methylsulfanyl-N(6)-dimethylallyladenosine(37) in tRNA + (sulfur carrier)-H + 5'-deoxyadenosine + L-methionine + A + S-adenosyl-L-homocysteine + 2 H(+). Catalyzes the methylthiolation of N6-(dimethylallyl)adenosine (i(6)A), leading to the formation of 2-methylthio-N6-(dimethylallyl)adenosine (ms(2)i(6)A) at position 37 in tRNAs that read codons beginning with uridine. This chain is tRNA-2-methylthio-N(6)-dimethylallyladenosine synthase, found in Bacillus pumilus (strain SAFR-032).